A 782-amino-acid chain; its full sequence is Ribosome biogenesis protein ERB1 (782 aa).

The span at M1–A11 shows a compositional bias: basic residues. Positions M1–K120 are disordered. Composition is skewed to acidic residues over residues D39–D51 and L59–E75. The span at R82–Q92 shows a compositional bias: polar residues. A compositionally biased stretch (acidic residues) spans G106–E117. 2 WD repeats span residues G432 to N471 and S475 to E516. A disordered region spans residues K533–R556. 4 WD repeats span residues R612 to Q652, P653 to K692, F696 to E736, and K752 to N782.

This sequence belongs to the WD repeat BOP1/ERB1 family. Component of the NOP7 complex, composed of ERB1, NOP7 and YTM1. The complex is held together by ERB1, which interacts with NOP7 via its N-terminal domain and with YTM1 via a high-affinity interaction between the seven-bladed beta-propeller domains of the 2 proteins. The NOP7 complex associates with the 66S pre-ribosome.

The protein localises to the nucleus. It localises to the nucleolus. It is found in the nucleoplasm. Component of the NOP7 complex, which is required for maturation of the 25S and 5.8S ribosomal RNAs and formation of the 60S ribosome. This is Ribosome biogenesis protein ERB1 from Phaeosphaeria nodorum (strain SN15 / ATCC MYA-4574 / FGSC 10173) (Glume blotch fungus).